Consider the following 270-residue polypeptide: Molybdenum-pterin-binding protein MopB (270 aa).

Mop domains follow at residues 131 to 197 and 203 to 269; these read RTSA…LLAG and RLSV…ILAL.

This sequence belongs to the ModE family.

This Rhodobacter capsulatus (Rhodopseudomonas capsulata) protein is Molybdenum-pterin-binding protein MopB (mopB).